A 316-amino-acid polypeptide reads, in one-letter code: Endochitinase WIN8 (316 aa).

The N-terminal stretch at 1-23 is a signal peptide; the sequence is MRFWALTVLSLLLSLLLGVSSDT. The Chitin-binding type-1 domain occupies 24–64; sequence AQCGSQAGNATCPNDLCCSSGGYCGLTVAYCCAGCVSQCRN. 7 cysteine pairs are disulfide-bonded: Cys26/Cys41, Cys35/Cys47, Cys40/Cys54, Cys58/Cys62, Cys84/Cys146, Cys158/Cys168, and Cys266/Cys298. Residue Glu128 is the Proton donor of the active site.

This sequence belongs to the glycosyl hydrolase 19 family. Chitinase class I subfamily.

The enzyme catalyses Random endo-hydrolysis of N-acetyl-beta-D-glucosaminide (1-&gt;4)-beta-linkages in chitin and chitodextrins.. Functionally, defense against chitin-containing fungal pathogens. In Populus trichocarpa (Western balsam poplar), this protein is Endochitinase WIN8 (WIN8).